Consider the following 154-residue polypeptide: Cold shock domain-containing protein C2 (154 aa).

Disordered stretches follow at residues 1 to 22 and 36 to 62; these read MTSE…SPVW and ERGG…SATA. At serine 19 the chain carries Phosphoserine. One can recognise a CSD domain in the interval 69 to 136; that stretch reads VFKGVCKQFS…KFQAVEVVLT (68 aa).

As to expression, brain-specific. Expression restricted to the pyramidal neurons of the cerebral cortex and in the Purkinje cells of the cerebellum.

Its subcellular location is the nucleus. It localises to the cytoplasm. Its function is as follows. RNA-binding factor which binds specifically to the very 3'-UTR ends of both histone H1 and H3.3 mRNAs, encompassing the polyadenylation signal. Might play a central role in the negative regulation of histone variant synthesis in the developing brain. The chain is Cold shock domain-containing protein C2 (Csdc2) from Rattus norvegicus (Rat).